Reading from the N-terminus, the 189-residue chain is UPF0251 protein MTH_1178 (189 aa).

Belongs to the UPF0251 family.

This Methanothermobacter thermautotrophicus (strain ATCC 29096 / DSM 1053 / JCM 10044 / NBRC 100330 / Delta H) (Methanobacterium thermoautotrophicum) protein is UPF0251 protein MTH_1178.